The primary structure comprises 94 residues: Phosphoribosyl-ATP pyrophosphatase (94 aa).

It belongs to the PRA-PH family.

It localises to the cytoplasm. The enzyme catalyses 1-(5-phospho-beta-D-ribosyl)-ATP + H2O = 1-(5-phospho-beta-D-ribosyl)-5'-AMP + diphosphate + H(+). It functions in the pathway amino-acid biosynthesis; L-histidine biosynthesis; L-histidine from 5-phospho-alpha-D-ribose 1-diphosphate: step 2/9. The chain is Phosphoribosyl-ATP pyrophosphatase from Pyrobaculum neutrophilum (strain DSM 2338 / JCM 9278 / NBRC 100436 / V24Sta) (Thermoproteus neutrophilus).